The chain runs to 226 residues: Glyceraldehyde 3-phosphate phosphatase (226 aa).

The protein belongs to the HAD-like hydrolase superfamily. It depends on Mg(2+) as a cofactor.

Catalyzes the dephosphorylation of D,L-glyceraldehyde 3-phosphate in vitro. The polypeptide is Glyceraldehyde 3-phosphate phosphatase (Methanothermobacter thermautotrophicus (strain ATCC 29096 / DSM 1053 / JCM 10044 / NBRC 100330 / Delta H) (Methanobacterium thermoautotrophicum)).